A 147-amino-acid chain; its full sequence is Large ribosomal subunit protein bL9 (147 aa).

Belongs to the bacterial ribosomal protein bL9 family.

Its function is as follows. Binds to the 23S rRNA. The chain is Large ribosomal subunit protein bL9 from Gemmatimonas aurantiaca (strain DSM 14586 / JCM 11422 / NBRC 100505 / T-27).